The sequence spans 459 residues: Alpha,alpha-trehalose-phosphate synthase [UDP-forming] (459 aa).

D-glucose 6-phosphate-binding residues include Tyr-86 and Asp-140. UDP is bound by residues Arg-262 and Lys-267. 2 residues coordinate UDP-alpha-D-glucose: Arg-262 and Lys-267. Arg-300 provides a ligand contact to D-glucose 6-phosphate. Residue 361 to 369 (DGMNLVALE) coordinates UDP-alpha-D-glucose. 365 to 369 (LVALE) provides a ligand contact to UDP.

This sequence belongs to the glycosyltransferase 20 family. In terms of assembly, component of the trehalose synthase complex.

It localises to the cytoplasm. The catalysed reaction is D-glucose 6-phosphate + UDP-alpha-D-glucose = alpha,alpha-trehalose 6-phosphate + UDP + H(+). Synthase catalytic subunit of the trehalose synthase complex that catalyzes the production of trehalose from glucose-6-phosphate and UDP-alpha-D-glucose in a two step process. Can function independently of the complex. The polypeptide is Alpha,alpha-trehalose-phosphate synthase [UDP-forming] (TPS1) (Encephalitozoon cuniculi (strain GB-M1) (Microsporidian parasite)).